Consider the following 574-residue polypeptide: Tyrosinase (574 aa).

Residues histidine 67, histidine 95, histidine 104, histidine 275, histidine 279, and histidine 304 each coordinate Cu cation. The segment at residues 93–95 (CTH) is a cross-link (2'-(S-cysteinyl)-histidine (Cys-His)).

This sequence belongs to the tyrosinase family. It depends on Cu(2+) as a cofactor.

The catalysed reaction is 2 L-dopa + O2 = 2 L-dopaquinone + 2 H2O. It carries out the reaction L-tyrosine + O2 = L-dopaquinone + H2O. This is a copper-containing oxidase that functions in the formation of pigments such as melanins and other polyphenolic compounds. This Podospora anserina (Pleurage anserina) protein is Tyrosinase (TYR).